The following is a 121-amino-acid chain: CRISPR system Cms protein Csm2 (121 aa).

Belongs to the CRISPR-associated Csm2 family. As to quaternary structure, part of the Csm effector complex that includes at least Cas10(1), Csm2(3), Csm3(5), Csm4(1), Csm5(1) and mature crRNA. The Csm complex is elongated and slightly twisted with a maximal length of 215 Angstroms and a diameter of 75-80 Angstroms. It has been modeled to have a central protein filamant of Csm3 subunits along which the dsRNA helix of paired crRNA and target RNA binds. The filament is capped at one end by Cas10 and Csm4 and at the other end by Csm5; ssDNA is thought to bind to the N-terminal HD domain of Cas10. Csm with a precursor crRNA does not include Csm5, while Cas6, the enzyme probably involved in pre-crRNA processing, is found associated with a subset of the Csm complex.

Its function is as follows. CRISPR (clustered regularly interspaced short palindromic repeat) is an adaptive immune system that provides protection against mobile genetic elements (viruses, transposable elements and conjugative plasmids). CRISPR clusters contain spacers, sequences complementary to antecedent mobile elements, and target invading nucleic acids. CRISPR clusters are transcribed and processed into CRISPR RNA (crRNA). The type III-A Csm effector complex binds crRNA and acts as a crRNA-guided RNase, DNase and cyclic oligoadenylate synthase; binding of target RNA cognate to the crRNA is required for all activities. In a heterologous host this Csm effector complex restricts ssRNA phage MS2, suggesting it may target RNA viruses in vivo. Csm functions as a non-specific ssDNase. Base-pairing between crRNA and target RNA to form a ternary Csm complex activates a ssDNase activity; target RNA cleavage suppresses the ssDNase, a temporal control that prevents uncontrolled DNA degradation. Viral RNA transcripts probably tether the Csm complex to the viral genome, recruiting Cas10 ssDNA activity which is able to degrade DNA in the transcription bubble, spatially controlling the DNase activity. In terms of biological role, this subunit may be involved in monitoring complementarity of crRNA and target RNA. This Streptococcus thermophilus protein is CRISPR system Cms protein Csm2.